A 129-amino-acid polypeptide reads, in one-letter code: Glycine cleavage system H protein (129 aa).

The region spanning 23–104 is the Lipoyl-binding domain; the sequence is SVTVGITQHA…CYAAWLFKLK (82 aa). Lysine 64 carries the post-translational modification N6-lipoyllysine.

This sequence belongs to the GcvH family. The glycine cleavage system is composed of four proteins: P, T, L and H. It depends on (R)-lipoate as a cofactor.

In terms of biological role, the glycine cleavage system catalyzes the degradation of glycine. The H protein shuttles the methylamine group of glycine from the P protein to the T protein. This is Glycine cleavage system H protein from Nitrosomonas europaea (strain ATCC 19718 / CIP 103999 / KCTC 2705 / NBRC 14298).